The chain runs to 210 residues: Thymidylate kinase (210 aa).

10–17 contacts ATP; that stretch reads GPEGAGKS.

This sequence belongs to the thymidylate kinase family.

The enzyme catalyses dTMP + ATP = dTDP + ADP. In terms of biological role, phosphorylation of dTMP to form dTDP in both de novo and salvage pathways of dTTP synthesis. The sequence is that of Thymidylate kinase from Pseudomonas fluorescens (strain Pf0-1).